The chain runs to 86 residues: Testis-expressed protein 54 (86 aa).

Positions 1-34 are enriched in basic and acidic residues; it reads MGCCQDKNRWASDEQARDEVTEDGREGNEVDNSG. Disordered stretches follow at residues 1–43 and 57–86; these read MGCC…SNES and SRRE…PEKG.

In terms of tissue distribution, expressed in Testis.

This Mus musculus (Mouse) protein is Testis-expressed protein 54.